Consider the following 526-residue polypeptide: Arylsulfatase G (526 aa).

An N-terminal signal peptide occupies residues 1–16 (MGWLFLKVLLVGMVFS). Ca(2+)-binding residues include Asp44, Asp45, and Cys84. The active-site Nucleophile is the Cys84. At Cys84 the chain carries 3-oxoalanine (Cys). Asn117 is a glycosylation site (N-linked (GlcNAc...) asparagine). Lys137 contributes to the substrate binding site. His139 is a catalytic residue. Position 162 (Ser162) interacts with substrate. N-linked (GlcNAc...) asparagine glycosylation is present at Asn215. Substrate is bound at residue His251. Residues Asp302 and Asn303 each coordinate Ca(2+). Asn356 and Asn497 each carry an N-linked (GlcNAc...) asparagine glycan.

The protein belongs to the sulfatase family. Ca(2+) serves as cofactor. N-glycosylated with both high mannose and complex type sugars. In terms of processing, the conversion to 3-oxoalanine (also known as C-formylglycine, FGly), of a serine or cysteine residue in prokaryotes and of a cysteine residue in eukaryotes, is critical for catalytic activity. Post-translationally, 63-kDa precursor undergoes proteolytic processing in two steps, yielding two fragments in the first step (apparent molecular masses of 44 and 18 kDa). In the second step, the 44-kDa fragment is processed further to the 34- and 10-kDa chains. The 10-kDa chain is a cleavage product of the 44-kDa fragment but linked to the 18-kDa chain through a disulfide bridge.

It is found in the lysosome. The enzyme catalyses an aryl sulfate + H2O = a phenol + sulfate + H(+). The catalysed reaction is Hydrolysis of the 3-sulfate groups of the N-sulfo-D-glucosamine 3-O-sulfate units of heparin.. Its function is as follows. Displays arylsulfatase activity at acidic pH towards the artificial substrate p-nitrocatechol sulfate. Catalyzes the hydrolysis of the 3-sulfate groups of the N-sulfo-D-glucosamine 3-O-sulfate units of heparin. The sequence is that of Arylsulfatase G (Arsg) from Rattus norvegicus (Rat).